Reading from the N-terminus, the 447-residue chain is uncharacterized protein (447 aa).

3 helical membrane-spanning segments follow: residues 28–48 (IVIVSATYSISLDSTVLYPAV), 241–261 (IDASFTSIFYSVFMLSIYYAI), and 397–417 (PFVLNVITVADGPCSFSLSIF).

It localises to the membrane. This is an uncharacterized protein from Schizosaccharomyces pombe (strain 972 / ATCC 24843) (Fission yeast).